The following is a 396-amino-acid chain: S-adenosylmethionine synthase (396 aa).

ATP is bound at residue histidine 16. Aspartate 18 lines the Mg(2+) pocket. Residue glutamate 44 coordinates K(+). L-methionine is bound by residues glutamate 57 and glutamine 100. The interval 100–110 (QSPDIAQGVDR) is flexible loop. ATP is bound by residues 167–169 (DAK), 232–233 (RF), aspartate 241, 247–248 (RK), alanine 264, and lysine 268. Residue aspartate 241 participates in L-methionine binding. Residue lysine 272 coordinates L-methionine.

The protein belongs to the AdoMet synthase family. Homotetramer; dimer of dimers. Mg(2+) serves as cofactor. Requires K(+) as cofactor.

It localises to the cytoplasm. The enzyme catalyses L-methionine + ATP + H2O = S-adenosyl-L-methionine + phosphate + diphosphate. Its pathway is amino-acid biosynthesis; S-adenosyl-L-methionine biosynthesis; S-adenosyl-L-methionine from L-methionine: step 1/1. In terms of biological role, catalyzes the formation of S-adenosylmethionine (AdoMet) from methionine and ATP. The overall synthetic reaction is composed of two sequential steps, AdoMet formation and the subsequent tripolyphosphate hydrolysis which occurs prior to release of AdoMet from the enzyme. The polypeptide is S-adenosylmethionine synthase (Ralstonia nicotianae (strain ATCC BAA-1114 / GMI1000) (Ralstonia solanacearum)).